Here is a 157-residue protein sequence, read N- to C-terminus: Transcription elongation factor GreA (157 aa).

It belongs to the GreA/GreB family.

Its function is as follows. Necessary for efficient RNA polymerase transcription elongation past template-encoded arresting sites. The arresting sites in DNA have the property of trapping a certain fraction of elongating RNA polymerases that pass through, resulting in locked ternary complexes. Cleavage of the nascent transcript by cleavage factors such as GreA or GreB allows the resumption of elongation from the new 3'terminus. GreA releases sequences of 2 to 3 nucleotides. This chain is Transcription elongation factor GreA, found in Brucella anthropi (strain ATCC 49188 / DSM 6882 / CCUG 24695 / JCM 21032 / LMG 3331 / NBRC 15819 / NCTC 12168 / Alc 37) (Ochrobactrum anthropi).